Reading from the N-terminus, the 74-residue chain is Mitotic-spindle organizing protein 1 (74 aa).

It belongs to the MOZART1 family. Part of the gamma-tubulin complex.

It is found in the cytoplasm. Its subcellular location is the cytoskeleton. It localises to the microtubule organizing center. The protein localises to the spindle pole body. Functionally, required for gamma-tubulin complex recruitment to the microtubule organizing center (MTOC). The chain is Mitotic-spindle organizing protein 1 from Emericella nidulans (strain FGSC A4 / ATCC 38163 / CBS 112.46 / NRRL 194 / M139) (Aspergillus nidulans).